Reading from the N-terminus, the 168-residue chain is MVEDILAPGLRVVFCGINPGLSSAGTGFPFAHPANRFWKVIYQAGFTDRQLKPQEAQHLLDYRCGVTKLVDRPTVQANEISNQELHAGGRKLIEKIEDYQPQALAILGKQAYEQGFSQRGAQWGKQTLSIGSTQIWVLPNPSGLSRVSLEKLVEAYRELDQALVVRGR.

This sequence belongs to the uracil-DNA glycosylase (UDG) superfamily. TDG/mug family. As to quaternary structure, binds DNA as a monomer.

Its subcellular location is the cytoplasm. The enzyme catalyses Specifically hydrolyzes mismatched double-stranded DNA and polynucleotides, releasing free uracil.. Functionally, excises ethenocytosine and uracil, which can arise by alkylation or deamination of cytosine, respectively, from the corresponding mispairs with guanine in ds-DNA. It is capable of hydrolyzing the carbon-nitrogen bond between the sugar-phosphate backbone of the DNA and the mispaired base. The complementary strand guanine functions in substrate recognition. Required for DNA damage lesion repair in stationary-phase cells. The polypeptide is G/U mismatch-specific DNA glycosylase (Shigella dysenteriae serotype 1 (strain Sd197)).